A 154-amino-acid chain; its full sequence is 17 kDa surface antigen (154 aa).

The first 19 residues, 1–19, serve as a signal peptide directing secretion; it reads MKLLSKIMVIALATSMLQA. The N-palmitoyl cysteine moiety is linked to residue C20. C20 carries the S-diacylglycerol cysteine lipid modification.

Belongs to the rickettsiale 17 kDa surface antigen family.

The protein localises to the cell outer membrane. This Rickettsia parkeri protein is 17 kDa surface antigen (omp).